The following is a 366-amino-acid chain: Tetraacyldisaccharide 4'-kinase (366 aa).

ATP is bound at residue 65–72; it reads TVGGTGKT. The interval 343–366 is disordered; that stretch reads AKSTPASGGATGLNKEHQDGQPAA. Residues 356 to 366 are compositionally biased toward basic and acidic residues; it reads NKEHQDGQPAA.

The protein belongs to the LpxK family.

It carries out the reaction a lipid A disaccharide + ATP = a lipid IVA + ADP + H(+). The protein operates within glycolipid biosynthesis; lipid IV(A) biosynthesis; lipid IV(A) from (3R)-3-hydroxytetradecanoyl-[acyl-carrier-protein] and UDP-N-acetyl-alpha-D-glucosamine: step 6/6. Its function is as follows. Transfers the gamma-phosphate of ATP to the 4'-position of a tetraacyldisaccharide 1-phosphate intermediate (termed DS-1-P) to form tetraacyldisaccharide 1,4'-bis-phosphate (lipid IVA). The sequence is that of Tetraacyldisaccharide 4'-kinase from Cupriavidus pinatubonensis (strain JMP 134 / LMG 1197) (Cupriavidus necator (strain JMP 134)).